The chain runs to 113 residues: Protein FMC1 homolog (113 aa).

Residues 94–113 (SAGLVGLKLPHQPGGKGWEP) are disordered.

Belongs to the FMC1 family. As to quaternary structure, interacts with ATPAF2.

The protein localises to the mitochondrion. Functionally, plays a role in the assembly/stability of the mitochondrial membrane ATP synthase (F(1)F(0) ATP synthase or Complex V). The protein is Protein FMC1 homolog of Homo sapiens (Human).